A 460-amino-acid chain; its full sequence is Probable carboxypeptidase TRV_02791 (460 aa).

The first 22 residues, 1 to 22 (MQKTYLWALVSLLASSLVDARS), serve as a signal peptide directing secretion. N98 carries N-linked (GlcNAc...) asparagine glycosylation. D175 provides a ligand contact to Zn(2+). The Proton acceptor role is filled by E207. E208 provides a ligand contact to Zn(2+). N395 carries an N-linked (GlcNAc...) asparagine glycan.

The protein belongs to the peptidase M20A family. Requires Zn(2+) as cofactor.

It localises to the secreted. The protein is Probable carboxypeptidase TRV_02791 of Trichophyton verrucosum (strain HKI 0517).